We begin with the raw amino-acid sequence, 94 residues long: Cystatin-A3 (94 aa).

The Secondary area of contact signature appears at 46-50 (QLVNG).

It belongs to the cystatin family.

It localises to the cytoplasm. Its function is as follows. Intracellular thiol proteinase inhibitor. In Dictyostelium discoideum (Social amoeba), this protein is Cystatin-A3 (cpiC).